A 316-amino-acid chain; its full sequence is 4-hydroxy-3-methylbut-2-enyl diphosphate reductase (316 aa).

Position 12 (Cys-12) interacts with [4Fe-4S] cluster. Residues His-41 and His-74 each contribute to the (2E)-4-hydroxy-3-methylbut-2-enyl diphosphate site. Positions 41 and 74 each coordinate dimethylallyl diphosphate. Isopentenyl diphosphate-binding residues include His-41 and His-74. Residue Cys-96 participates in [4Fe-4S] cluster binding. His-124 serves as a coordination point for (2E)-4-hydroxy-3-methylbut-2-enyl diphosphate. Residue His-124 coordinates dimethylallyl diphosphate. Isopentenyl diphosphate is bound at residue His-124. Glu-126 serves as the catalytic Proton donor. Thr-169 contributes to the (2E)-4-hydroxy-3-methylbut-2-enyl diphosphate binding site. Residue Cys-199 participates in [4Fe-4S] cluster binding. Residues Ser-227, Ser-228, Asn-229, and Ser-271 each coordinate (2E)-4-hydroxy-3-methylbut-2-enyl diphosphate. Dimethylallyl diphosphate-binding residues include Ser-227, Ser-228, Asn-229, and Ser-271. Isopentenyl diphosphate is bound by residues Ser-227, Ser-228, Asn-229, and Ser-271.

It belongs to the IspH family. [4Fe-4S] cluster is required as a cofactor.

It carries out the reaction isopentenyl diphosphate + 2 oxidized [2Fe-2S]-[ferredoxin] + H2O = (2E)-4-hydroxy-3-methylbut-2-enyl diphosphate + 2 reduced [2Fe-2S]-[ferredoxin] + 2 H(+). The enzyme catalyses dimethylallyl diphosphate + 2 oxidized [2Fe-2S]-[ferredoxin] + H2O = (2E)-4-hydroxy-3-methylbut-2-enyl diphosphate + 2 reduced [2Fe-2S]-[ferredoxin] + 2 H(+). The protein operates within isoprenoid biosynthesis; dimethylallyl diphosphate biosynthesis; dimethylallyl diphosphate from (2E)-4-hydroxy-3-methylbutenyl diphosphate: step 1/1. It functions in the pathway isoprenoid biosynthesis; isopentenyl diphosphate biosynthesis via DXP pathway; isopentenyl diphosphate from 1-deoxy-D-xylulose 5-phosphate: step 6/6. Its function is as follows. Catalyzes the conversion of 1-hydroxy-2-methyl-2-(E)-butenyl 4-diphosphate (HMBPP) into a mixture of isopentenyl diphosphate (IPP) and dimethylallyl diphosphate (DMAPP). Acts in the terminal step of the DOXP/MEP pathway for isoprenoid precursor biosynthesis. The sequence is that of 4-hydroxy-3-methylbut-2-enyl diphosphate reductase from Xanthomonas campestris pv. campestris (strain ATCC 33913 / DSM 3586 / NCPPB 528 / LMG 568 / P 25).